The primary structure comprises 301 residues: GTPase Era (301 aa).

Residues 7–175 (YCGFIAIVGR…AAIVRKHLPE (169 aa)) form the Era-type G domain. Residues 15–22 (GRPNVGKS) form a G1 region. A GTP-binding site is contributed by 15-22 (GRPNVGKS). Residues 41 to 45 (QTTRH) are G2. Positions 62-65 (DTPG) are G3. GTP-binding positions include 62–66 (DTPGL) and 124–127 (NKVD). The G4 stretch occupies residues 124 to 127 (NKVD). Residues 154-156 (ISA) are G5. One can recognise a KH type-2 domain in the interval 206–283 (LGAELPYSVT…HLELWVKVKS (78 aa)).

This sequence belongs to the TRAFAC class TrmE-Era-EngA-EngB-Septin-like GTPase superfamily. Era GTPase family. As to quaternary structure, monomer.

The protein resides in the cytoplasm. Its subcellular location is the cell inner membrane. Functionally, an essential GTPase that binds both GDP and GTP, with rapid nucleotide exchange. Plays a role in 16S rRNA processing and 30S ribosomal subunit biogenesis and possibly also in cell cycle regulation and energy metabolism. The chain is GTPase Era from Escherichia coli (strain K12 / DH10B).